Consider the following 167-residue polypeptide: Transcriptional regulator MraZ (167 aa).

SpoVT-AbrB domains are found at residues 8–51 (ESHH…YGDH) and 92–135 (SLPT…KPET).

This sequence belongs to the MraZ family. Forms oligomers.

The protein localises to the cytoplasm. The protein resides in the nucleoid. The polypeptide is Transcriptional regulator MraZ (Ruegeria sp. (strain TM1040) (Silicibacter sp.)).